Consider the following 247-residue polypeptide: Adenosylcobinamide-GDP ribazoletransferase (247 aa).

5 helical membrane-spanning segments follow: residues 34-54 (IVMFPFIGLILGGVSGLIFIL), 59-79 (CGIPLAALFCILALALLTGGF), 113-133 (GGLALIFVLLAKILVVSELAL), 138-158 (MLAALAAACAAGRGSAVLLMY), and 187-207 (LAVIVATVLLPGMQGLAAMVV).

The protein belongs to the CobS family. Requires Mg(2+) as cofactor.

It is found in the cell inner membrane. The enzyme catalyses alpha-ribazole + adenosylcob(III)inamide-GDP = adenosylcob(III)alamin + GMP + H(+). It carries out the reaction alpha-ribazole 5'-phosphate + adenosylcob(III)inamide-GDP = adenosylcob(III)alamin 5'-phosphate + GMP + H(+). Its pathway is cofactor biosynthesis; adenosylcobalamin biosynthesis; adenosylcobalamin from cob(II)yrinate a,c-diamide: step 7/7. Joins adenosylcobinamide-GDP and alpha-ribazole to generate adenosylcobalamin (Ado-cobalamin). Also synthesizes adenosylcobalamin 5'-phosphate from adenosylcobinamide-GDP and alpha-ribazole 5'-phosphate. The protein is Adenosylcobinamide-GDP ribazoletransferase of Salmonella dublin (strain CT_02021853).